A 343-amino-acid polypeptide reads, in one-letter code: Phenylalanine--tRNA ligase alpha subunit (343 aa).

Glu-258 contributes to the Mg(2+) binding site.

Belongs to the class-II aminoacyl-tRNA synthetase family. Phe-tRNA synthetase alpha subunit type 1 subfamily. Tetramer of two alpha and two beta subunits. Mg(2+) serves as cofactor.

It is found in the cytoplasm. The catalysed reaction is tRNA(Phe) + L-phenylalanine + ATP = L-phenylalanyl-tRNA(Phe) + AMP + diphosphate + H(+). This is Phenylalanine--tRNA ligase alpha subunit from Symbiobacterium thermophilum (strain DSM 24528 / JCM 14929 / IAM 14863 / T).